The primary structure comprises 95 residues: MKIRPLHDKVILKREEIETKSAGGIVLTGSAATKSTRGTVIAVGNGRTLDNGTVLPLNVKVGDVVIFNEYGVKEEKIDGETVLILSEDNILAIVE.

The protein belongs to the GroES chaperonin family. In terms of assembly, heptamer of 7 subunits arranged in a ring. Interacts with the chaperonin GroEL.

It is found in the cytoplasm. In terms of biological role, together with the chaperonin GroEL, plays an essential role in assisting protein folding. The GroEL-GroES system forms a nano-cage that allows encapsulation of the non-native substrate proteins and provides a physical environment optimized to promote and accelerate protein folding. GroES binds to the apical surface of the GroEL ring, thereby capping the opening of the GroEL channel. This chain is Co-chaperonin GroES, found in Glaesserella parasuis serovar 5 (strain SH0165) (Haemophilus parasuis).